A 275-amino-acid polypeptide reads, in one-letter code: Elongation factor Ts (275 aa).

An involved in Mg(2+) ion dislocation from EF-Tu region spans residues threonine 76 to valine 79.

This sequence belongs to the EF-Ts family.

Its subcellular location is the cytoplasm. Its function is as follows. Associates with the EF-Tu.GDP complex and induces the exchange of GDP to GTP. It remains bound to the aminoacyl-tRNA.EF-Tu.GTP complex up to the GTP hydrolysis stage on the ribosome. This Corynebacterium kroppenstedtii (strain DSM 44385 / JCM 11950 / CIP 105744 / CCUG 35717) protein is Elongation factor Ts.